Consider the following 93-residue polypeptide: Small ribosomal subunit protein uS17 (93 aa).

It belongs to the universal ribosomal protein uS17 family. Part of the 30S ribosomal subunit.

One of the primary rRNA binding proteins, it binds specifically to the 5'-end of 16S ribosomal RNA. This is Small ribosomal subunit protein uS17 from Corynebacterium kroppenstedtii (strain DSM 44385 / JCM 11950 / CIP 105744 / CCUG 35717).